A 579-amino-acid polypeptide reads, in one-letter code: Probable cytochrome c biosynthesis protein (579 aa).

This sequence belongs to the CcmF/CycK/Ccl1/NrfE/CcsA family.

Its subcellular location is the mitochondrion. Functionally, could be involved in assembly and maturation of cytochromes c. May play a role in guidance of apocytochromes and heme groups for the covalent linkage introduced by the cytochrome-c-heme lyase. The chain is Probable cytochrome c biosynthesis protein from Daucus carota (Wild carrot).